A 206-amino-acid chain; its full sequence is Dephospho-CoA kinase (206 aa).

Residues 4–204 (VIGLTGGIAS…EGYIESHSED (201 aa)) form the DPCK domain. 12-17 (ASGKST) lines the ATP pocket.

It belongs to the CoaE family.

It is found in the cytoplasm. The catalysed reaction is 3'-dephospho-CoA + ATP = ADP + CoA + H(+). The protein operates within cofactor biosynthesis; coenzyme A biosynthesis; CoA from (R)-pantothenate: step 5/5. Its function is as follows. Catalyzes the phosphorylation of the 3'-hydroxyl group of dephosphocoenzyme A to form coenzyme A. In Staphylococcus saprophyticus subsp. saprophyticus (strain ATCC 15305 / DSM 20229 / NCIMB 8711 / NCTC 7292 / S-41), this protein is Dephospho-CoA kinase.